Consider the following 657-residue polypeptide: N-acetylgalactosaminyltransferase 7 (657 aa).

Over 1–6 the chain is Cytoplasmic; that stretch reads MRLKIG. A helical; Signal-anchor for type II membrane protein membrane pass occupies residues 7-29; that stretch reads FILRSLLVVGSFLGLVVLWSSLT. Over 30–657 the chain is Lumenal; the sequence is PRPDDPSPLS…KWEMNNIHSV (628 aa). The segment at 31–66 is disordered; it reads RPDDPSPLSRMREDRDVNDPMPNRGGNGLAPGEDRF. Disulfide bonds link Cys-197/Cys-435, Cys-426/Cys-507, Cys-545/Cys-562, Cys-585/Cys-600, and Cys-625/Cys-640. A catalytic subdomain A region spans residues 206–317; it reads LLTSSVVIVF…VNWYAPLVAP (112 aa). Residues Asp-247 and Arg-277 each coordinate substrate. Mn(2+)-binding residues include Asp-301 and His-303. The tract at residues 381–443 is catalytic subdomain B; that stretch reads PYRSPAMAGG…PCSRVGHIYR (63 aa). A substrate-binding site is contributed by Trp-412. Residue His-440 coordinates Mn(2+). Residue Arg-443 coordinates substrate. The Ricin B-type lectin domain occupies 532–652; sequence VDWGEIRGFE…SKTTQKWEMN (121 aa).

It belongs to the glycosyltransferase 2 family. GalNAc-T subfamily. The cofactor is Mn(2+).

Its subcellular location is the golgi apparatus membrane. The enzyme catalyses L-seryl-[protein] + UDP-N-acetyl-alpha-D-galactosamine = a 3-O-[N-acetyl-alpha-D-galactosaminyl]-L-seryl-[protein] + UDP + H(+). It carries out the reaction L-threonyl-[protein] + UDP-N-acetyl-alpha-D-galactosamine = a 3-O-[N-acetyl-alpha-D-galactosaminyl]-L-threonyl-[protein] + UDP + H(+). The protein operates within protein modification; protein glycosylation. Functionally, glycopeptide transferase involved in O-linked oligosaccharide biosynthesis, which catalyzes the transfer of an N-acetyl-D-galactosamine residue to an already glycosylated peptide. In contrast to other proteins of the family, it does not act as a peptide transferase that transfers GalNAc onto serine or threonine residue on the protein receptor, but instead requires the prior addition of a GalNAc on a peptide before adding additional GalNAc moieties. Some peptide transferase activity is however not excluded, considering that its appropriate peptide substrate may remain unidentified. This Pongo abelii (Sumatran orangutan) protein is N-acetylgalactosaminyltransferase 7 (GALNT7).